The following is an 800-amino-acid chain: General transcription and DNA repair factor IIH helicase/translocase subunit XPB (800 aa).

Residues 1-27 (MSSGDSNLKRRRGGNTGQSSKSYNTWT) form a disordered region. The segment covering 17 to 27 (GQSSKSYNTWT) has biased composition (polar residues). Residues 329-491 (MFGNGRARSG…DLNFLIGPKL (163 aa)) form the Helicase ATP-binding domain. Residue 342–349 (LPCGAGKS) participates in ATP binding. Residues 444-447 (DEVH) carry the DEVH box motif. One can recognise a Helicase C-terminal domain in the interval 546 to 704 (RACEYLIRFH…ELPGIDQEVN (159 aa)). The disordered stretch occupies residues 743 to 769 (GAKKSKSSAPTVSRTTGGSTRALSGGN). The segment covering 749 to 764 (SSAPTVSRTTGGSTRA) has biased composition (polar residues).

Belongs to the helicase family. RAD25/XPB subfamily. As to quaternary structure, component of the 7-subunit TFIIH core complex composed of XPB/repB, XPD/repD, gtf2h1, gtf2h2, gtf2h3, gtf2h4 and gtf2h5, which is active in NER. The core complex associates with the 3-subunit CDK-activating kinase (CAK) module composed of cycH/cyclin H, cdk7 and mnat1 to form the 10-subunit holoenzyme (holo-TFIIH) active in transcription.

Its subcellular location is the nucleus. The catalysed reaction is Couples ATP hydrolysis with the unwinding of duplex DNA by translocating in the 3'-5' direction.. It catalyses the reaction ATP + H2O = ADP + phosphate + H(+). Functionally, ATP-dependent 3'-5' DNA helicase/translocase; binds dsDNA rather than ssDNA, unzipping it in a translocase rather than classical helicase activity. Component of the general transcription and DNA repair factor IIH (TFIIH) core complex. When complexed to CDK-activating kinase (CAK), involved in RNA transcription by RNA polymerase II. The ATPase activity of XPB/ERCC3, but not its helicase activity, is required for DNA opening; it may wrap around the damaged DNA wedging it open, causing localized melting and twisting that allows XPD/ERCC2 helicase to anchor. The ATP-dependent helicase activity of XPB/ERCC3 may be required for promoter escape. Also involved in transcription-coupled nucleotide excision repair (NER) of damaged DNA. In NER, TFIIH acts by opening DNA around the lesion to allow the excision of the damaged oligonucleotide and its replacement by a new DNA fragment. The structure of the TFIIH transcription complex differs from the NER-TFIIH complex. The polypeptide is General transcription and DNA repair factor IIH helicase/translocase subunit XPB (Dictyostelium discoideum (Social amoeba)).